We begin with the raw amino-acid sequence, 120 residues long: Glutamate--tRNA ligase (120 aa).

This sequence belongs to the class-I aminoacyl-tRNA synthetase family. Glutamate--tRNA ligase type 1 subfamily. In terms of assembly, monomer.

Its subcellular location is the cytoplasm. It carries out the reaction tRNA(Glu) + L-glutamate + ATP = L-glutamyl-tRNA(Glu) + AMP + diphosphate. In terms of biological role, catalyzes the attachment of glutamate to tRNA(Glu) in a two-step reaction: glutamate is first activated by ATP to form Glu-AMP and then transferred to the acceptor end of tRNA(Glu). The polypeptide is Glutamate--tRNA ligase (gltX) (Staphylococcus xylosus).